The following is a 292-amino-acid chain: Ribosomal protein L11 methyltransferase (292 aa).

The S-adenosyl-L-methionine site is built by Thr-144, Gly-165, Asp-187, and Asn-229.

The protein belongs to the methyltransferase superfamily. PrmA family.

The protein resides in the cytoplasm. It catalyses the reaction L-lysyl-[protein] + 3 S-adenosyl-L-methionine = N(6),N(6),N(6)-trimethyl-L-lysyl-[protein] + 3 S-adenosyl-L-homocysteine + 3 H(+). Its function is as follows. Methylates ribosomal protein L11. The chain is Ribosomal protein L11 methyltransferase from Pseudomonas fluorescens (strain ATCC BAA-477 / NRRL B-23932 / Pf-5).